Here is a 196-residue protein sequence, read N- to C-terminus: UPF0215 protein MM_1007 (196 aa).

Belongs to the UPF0215 family.

The polypeptide is UPF0215 protein MM_1007 (Methanosarcina mazei (strain ATCC BAA-159 / DSM 3647 / Goe1 / Go1 / JCM 11833 / OCM 88) (Methanosarcina frisia)).